Here is a 303-residue protein sequence, read N- to C-terminus: NAD kinase (303 aa).

D71 functions as the Proton acceptor in the catalytic mechanism. Residues 71 to 72 (DG), 145 to 146 (ND), R156, R173, D175, 186 to 191 (TGYSLS), and Q245 each bind NAD(+).

The protein belongs to the NAD kinase family. Requires a divalent metal cation as cofactor.

The protein resides in the cytoplasm. The enzyme catalyses NAD(+) + ATP = ADP + NADP(+) + H(+). Its function is as follows. Involved in the regulation of the intracellular balance of NAD and NADP, and is a key enzyme in the biosynthesis of NADP. Catalyzes specifically the phosphorylation on 2'-hydroxyl of the adenosine moiety of NAD to yield NADP. The chain is NAD kinase from Magnetococcus marinus (strain ATCC BAA-1437 / JCM 17883 / MC-1).